A 377-amino-acid chain; its full sequence is E3 ubiquitin-protein ligase RING1 (377 aa).

The interval 1–205 (MDGTEIAVSP…GGAGSEDSGD (205 aa)) is necessary for transcriptional repression. Residue Ser9 is modified to Phosphoserine. The RING-type zinc-finger motif lies at 19 to 59 (CPICLDMLKNTMTTKECLHRFCSDCIVTALRSGNKECPTCR). Residues Ser111, Ser158, and Ser161 each carry the phosphoserine modification. Disordered stretches follow at residues 119 to 234 (QAMH…GEIE) and 280 to 325 (QQQE…PSLE). Positions 146–158 (DPGEGEGDGEDVS) are enriched in acidic residues. The Nuclear localization signal signature appears at 172-175 (KRPR). Positions 176-199 (GGGAGGSSVGTGGGGTGGVGGGAG) are enriched in gly residues. Phosphothreonine is present on residues Thr186 and Thr191. Residues Ser200 and Ser203 each carry the phosphoserine modification. The necessary for interaction with CBX2 stretch occupies residues 201-377 (EDSGDRGGTL…LCYAPTKDPK (177 aa)). Positions 206 to 215 (RGGTLGGGTL) are enriched in gly residues. Residues 217–229 (PPSPPGAPSPPEP) are compositionally biased toward pro residues. Residues Ser219 and Ser225 each carry the phosphoserine modification. A compositionally biased stretch (gly residues) spans 286–314 (EPGGPGGGASDTGGPDGGGGEGGGAGGGD).

As to quaternary structure, component of chromatin-associated Polycomb (PcG) complexes. Part of the E2F6.com-1 complex in G0 phase composed of E2F6, MGA, MAX, TFDP1, CBX3, BAT8, EUHMTASE1, RING1, RNF2/RING2 MBLR, L3MBTL2 and YAF2. Interacts with CBX2 and PCGF6. Component of a PRC1-like complex. Component of repressive BCOR complex containing Polycomb group subcomplex at least composed of RYBP, PCGF1, BCOR and RNF2/RING2. Interacts with BMI1, PHC2, PCGF2, RNF2; CBX6, CBX7 and CBX8. Interacts with MN1.

It is found in the nucleus speckle. The enzyme catalyses S-ubiquitinyl-[E2 ubiquitin-conjugating enzyme]-L-cysteine + [acceptor protein]-L-lysine = [E2 ubiquitin-conjugating enzyme]-L-cysteine + N(6)-ubiquitinyl-[acceptor protein]-L-lysine.. The protein operates within protein modification; protein ubiquitination. Constitutes one of the E3 ubiquitin-protein ligases that mediate monoubiquitination of 'Lys-119' of histone H2A, thereby playing a central role in histone code and gene regulation. H2A 'Lys-119' ubiquitination gives a specific tag for epigenetic transcriptional repression and participates in X chromosome inactivation of female mammals. Essential component of a Polycomb group (PcG) multiprotein PRC1-like complex, a complex class required to maintain the transcriptionally repressive state of many genes, including Hox genes, throughout development. PcG PRC1 complex acts via chromatin remodeling and modification of histones, rendering chromatin heritably changed in its expressibility. Compared to RNF2/RING2, it does not have the main E3 ubiquitin ligase activity on histone H2A, and it may rather act as a modulator of RNF2/RING2 activity. The polypeptide is E3 ubiquitin-protein ligase RING1 (RING1) (Gorilla gorilla gorilla (Western lowland gorilla)).